The following is a 248-amino-acid chain: 5'-nucleotidase SurE (248 aa).

A divalent metal cation-binding residues include Asp8, Asp9, Ser39, and Asn91.

This sequence belongs to the SurE nucleotidase family. Requires a divalent metal cation as cofactor.

Its subcellular location is the cytoplasm. It catalyses the reaction a ribonucleoside 5'-phosphate + H2O = a ribonucleoside + phosphate. Its function is as follows. Nucleotidase that shows phosphatase activity on nucleoside 5'-monophosphates. The protein is 5'-nucleotidase SurE of Geotalea uraniireducens (strain Rf4) (Geobacter uraniireducens).